A 109-amino-acid chain; its full sequence is Large ribosomal subunit protein P1 (109 aa).

The segment at 90-109 (AAAKKEEEEEDDDMGFGLFD) is disordered.

Belongs to the eukaryotic ribosomal protein P1/P2 family. P1 and P2 exist as dimers at the large ribosomal subunit.

In terms of biological role, plays an important role in the elongation step of protein synthesis. In Trypanosoma cruzi, this protein is Large ribosomal subunit protein P1.